Reading from the N-terminus, the 186-residue chain is UPF0397 protein SGO_0469 (186 aa).

5 consecutive transmembrane segments (helical) span residues 14–34, 50–70, 77–97, 119–139, and 152–172; these read VVAT…SIPT, LFGV…GHAL, GNPW…VGLL, AQFV…DILI, and VVAT…LLIA.

It belongs to the UPF0397 family.

Its subcellular location is the cell membrane. This is UPF0397 protein SGO_0469 from Streptococcus gordonii (strain Challis / ATCC 35105 / BCRC 15272 / CH1 / DL1 / V288).